A 155-amino-acid polypeptide reads, in one-letter code: Large ribosomal subunit protein uL22c (155 aa).

This sequence belongs to the universal ribosomal protein uL22 family. As to quaternary structure, part of the 50S ribosomal subunit.

It localises to the plastid. Its subcellular location is the chloroplast. Its function is as follows. This protein binds specifically to 23S rRNA. Functionally, the globular domain of the protein is located near the polypeptide exit tunnel on the outside of the subunit, while an extended beta-hairpin is found that lines the wall of the exit tunnel in the center of the 70S ribosome. This is Large ribosomal subunit protein uL22c (rpl22) from Nicotiana sylvestris (Wood tobacco).